Consider the following 665-residue polypeptide: E3 ubiquitin-protein ligase cblA (665 aa).

Residues 30-50 (NNNNNINNNNNNNNINSNNNG) are disordered. The tract at residues 109-231 (TSLVNYIHYE…NNENNNNNNN (123 aa)) is 4H. One can recognise a Cbl-PTB domain in the interval 109-400 (TSLVNYIHYE…PDIFKSILSF (292 aa)). Positions 232–306 (NYNPYELLSN…FKLSVFIKWF (75 aa)) are EF-hand-like. Residues aspartate 287, threonine 289, aspartate 291, and tyrosine 293 each coordinate Ca(2+). The tract at residues 307–400 (GALPVSLGIF…PDIFKSILSF (94 aa)) is SH2-like. Disordered stretches follow at residues 437 to 456 (ENNN…INTF) and 467 to 609 (DSSN…NNNN). Low complexity predominate over residues 467 to 478 (DSSNSSDTNKSP). The stretch at 479–544 (TKSRKSSFKN…NNNNNNNNNN (66 aa)) forms a coiled coil. Basic and acidic residues predominate over residues 486-512 (FKNDKDKKEKEKEKGKDKEKEKERVSD). Low complexity-rich tracts occupy residues 530–561 (NNNN…NNNN) and 571–609 (TSNG…NNNN). Residues 618 to 653 (CTVCMDNEINTVFLECGHLSCCSLCSVKLKKCPICR) form an RING-type zinc finger.

Post-translationally, ubiquitinated.

The protein resides in the cytoplasm. It localises to the nucleus. The catalysed reaction is S-ubiquitinyl-[E2 ubiquitin-conjugating enzyme]-L-cysteine + [acceptor protein]-L-lysine = [E2 ubiquitin-conjugating enzyme]-L-cysteine + N(6)-ubiquitinyl-[acceptor protein]-L-lysine.. Its pathway is protein modification; protein ubiquitination. Its function is as follows. Acts as an E3 ubiquitin-protein ligase, which accepts ubiquitin from specific E2 ubiquitin-conjugating enzymes, and then transfers it to substrates promoting their degradation by the proteasome. Up-regulates STATc tyrosine phosphorylation via an inhibitory effect on ptpC accumulation. Recognizes activated receptor tyrosine kinases, RTKs and terminates signaling. This is E3 ubiquitin-protein ligase cblA (cblA-1) from Dictyostelium discoideum (Social amoeba).